The sequence spans 189 residues: Large ribosomal subunit protein eL14 (189 aa).

The protein belongs to the eukaryotic ribosomal protein eL14 family.

Its function is as follows. Component of the large ribosomal subunit. The ribosome is a large ribonucleoprotein complex responsible for the synthesis of proteins in the cell. The sequence is that of Large ribosomal subunit protein eL14 from Trypanosoma brucei brucei.